A 129-amino-acid chain; its full sequence is Small ribosomal subunit protein uS8 (129 aa).

The protein belongs to the universal ribosomal protein uS8 family. In terms of assembly, part of the 30S ribosomal subunit. Contacts proteins S5 and S12.

Functionally, one of the primary rRNA binding proteins, it binds directly to 16S rRNA central domain where it helps coordinate assembly of the platform of the 30S subunit. This Spiroplasma kunkelii protein is Small ribosomal subunit protein uS8.